We begin with the raw amino-acid sequence, 959 residues long: Xylosyltransferase 1 (959 aa).

The Cytoplasmic segment spans residues 1–17 (MVAAPCARRLARRSHSA). Residues 18 to 38 (LLAALTVLLLQTLVVWNFSSL) form a helical; Signal-anchor for type II membrane protein membrane-spanning segment. Over 39–959 (DSGAGERRGG…GAVKPDGRLR (921 aa)) the chain is Lumenal. Residues 42-259 (AGERRGGAAV…KYDQPPKCDI (218 aa)) form a disordered region. The segment covering 78–104 (RGGGGGGGGGGGGRGPQARARGGGPGE) has biased composition (gly residues). Residues 145–161 (KVRTDSNNENSVPKDFE) are compositionally biased toward basic and acidic residues. A compositionally biased stretch (polar residues) spans 163 to 172 (VDNSNFAPRT). Residues 177–204 (HQPELAKKPPSRQKELLKRKLEQQEKGK) are compositionally biased toward basic and acidic residues. An N-linked (GlcNAc...) asparagine glycan is attached at asparagine 226. Over residues 249 to 259 (TKYDQPPKCDI) the composition is skewed to basic and acidic residues. 4 disulfides stabilise this stretch: cysteine 257–cysteine 285, cysteine 301–cysteine 542, cysteine 561–cysteine 574, and cysteine 563–cysteine 572. Residues valine 333, aspartate 361, and 390–392 (TIW) contribute to the UDP-alpha-D-xylose site. N-linked (GlcNAc...) asparagine glycosylation is present at asparagine 421. A UDP-alpha-D-xylose-binding site is contributed by 494 to 495 (DW). UDP-alpha-D-xylose contacts are provided by residues serine 575 and 598 to 599 (RK). Disulfide bonds link cysteine 675–cysteine 927 and cysteine 920–cysteine 933. Residue asparagine 777 is glycosylated (N-linked (GlcNAc...) asparagine). Residues 940 to 959 (SFSPDPKSELGAVKPDGRLR) are disordered.

The protein belongs to the glycosyltransferase 14 family. XylT subfamily. In terms of assembly, monomer. A divalent metal cation serves as cofactor. In terms of processing, contains 7 disulfide bonds. Post-translationally, N-glycosylated. As to expression, widely expressed. Expressed at higher level in placenta, kidney and pancreas. Weakly expressed in skeletal muscle.

The protein resides in the golgi apparatus membrane. It is found in the secreted. It catalyses the reaction UDP-alpha-D-xylose + L-seryl-[protein] = 3-O-(beta-D-xylosyl)-L-seryl-[protein] + UDP + H(+). Its pathway is glycan metabolism; chondroitin sulfate biosynthesis. It functions in the pathway glycan metabolism; heparan sulfate biosynthesis. Its function is as follows. Catalyzes the first step in the biosynthesis of chondroitin sulfate and dermatan sulfate proteoglycans, such as DCN. Transfers D-xylose from UDP-D-xylose to specific serine residues of the core protein. Required for normal embryonic and postnatal skeleton development, especially of the long bones. Required for normal maturation of chondrocytes during bone development, and normal onset of ossification. The protein is Xylosyltransferase 1 (XYLT1) of Homo sapiens (Human).